We begin with the raw amino-acid sequence, 291 residues long: RPE-retinal G protein-coupled receptor (291 aa).

Residues 1 to 15 (MAATRALPAGLGELE) are Extracellular-facing. The chain crosses the membrane as a helical span at residues 16 to 36 (VLAVGTVLLMEALSGISLNGL). At 37–52 (TIFSFCKTPDLRTPSN) the chain is on the cytoplasmic side. A helical membrane pass occupies residues 53–73 (LLVLSLALADTGISLNALVAA). The Extracellular segment spans residues 74–91 (VSSLLRRWPHGSEGCQVH). A disulfide bridge connects residues Cys-88 and Cys-162. The helical transmembrane segment at 92–112 (GFQGFATALASICGSAAVAWG) threads the bilayer. Over 113-130 (RYHHYCTRRQLAWDTAIP) the chain is Cytoplasmic. A helical transmembrane segment spans residues 131 to 151 (LVLFVWMSSAFWASLPLMGWG). At 152–175 (HYDYEPVGTCCTLDYSRGDRNFIS) the chain is on the extracellular side. A helical membrane pass occupies residues 176–196 (FLFTMAFFNFLVPLFITHTSY). Residues 197-219 (RFMEQKFSRSGHLPVNTTLPGRM) lie on the Cytoplasmic side of the membrane. The helical transmembrane segment at 220-240 (LLLGWGPYALLYLYAAIADVS) threads the bilayer. Over 241–247 (FISPKLQ) the chain is Extracellular. The chain crosses the membrane as a helical span at residues 248–268 (MVPALIAKTMPTINAINYALH). Position 255 is an N6-(retinylidene)lysine (Lys-255). Over 269 to 291 (REMVCRGTWQCLSPQKSKKDRTQ) the chain is Cytoplasmic.

This sequence belongs to the G-protein coupled receptor 1 family. Opsin subfamily. In terms of processing, covalently binds all-trans- and 11-cis-retinal.

The protein localises to the membrane. Its function is as follows. Receptor for all-trans- and 11-cis-retinal. Binds preferentially to the former and may catalyze the isomerization of the chromophore by a retinochrome-like mechanism. This is RPE-retinal G protein-coupled receptor (Rgr) from Mus musculus (Mouse).